A 98-amino-acid chain; its full sequence is MALTKAELAEALFEQLGMSKRDAKDTVEVFFEEIRKALESGEQVKLSGFGNFDLRDKNERPGRNPKTGEDIPITARRVVTFRPGQKLKARVENIKVEK.

The segment at Asn-51–Ile-71 is disordered. Positions Asp-53–Glu-69 are enriched in basic and acidic residues.

This sequence belongs to the bacterial histone-like protein family. As to quaternary structure, heterodimer of an alpha and a beta chain.

Functionally, this protein is one of the two subunits of integration host factor, a specific DNA-binding protein that functions in genetic recombination as well as in transcriptional and translational control. The chain is Integration host factor subunit alpha from Vibrio cholerae serotype O1 (strain ATCC 39541 / Classical Ogawa 395 / O395).